A 581-amino-acid chain; its full sequence is Frizzled-10 (581 aa).

The N-terminal stretch at 1–20 is a signal peptide; sequence MQRPGPRLWLVLQVMGSCAA. Topologically, residues 21–225 are extracellular; the sequence is ISSMDMERPG…DVYWSREDKR (205 aa). In terms of domain architecture, FZ spans 29–150; that stretch reads PGDGKCQPIE…NDPNYLCMEA (122 aa). 5 disulfide bridges follow: Cys-34–Cys-95, Cys-42–Cys-88, Cys-79–Cys-117, Cys-106–Cys-147, and Cys-110–Cys-134. N-linked (GlcNAc...) asparagine glycosylation is present at Asn-48. Asn-153 carries N-linked (GlcNAc...) asparagine glycosylation. The chain crosses the membrane as a helical span at residues 226–246; it reads FAVVWLAIWAVLCFFSSAFTV. Topologically, residues 247 to 262 are cytoplasmic; sequence LTFLIDPARFRYPERP. The helical transmembrane segment at 263–283 threads the bilayer; the sequence is IIFLSMCYCVYSVGYLIRLFA. Residues 284-311 lie on the Extracellular side of the membrane; that stretch reads GAESIACDRDSGQLYVIQEGLESTGCTL. A helical membrane pass occupies residues 312 to 332; the sequence is VFLVLYYFGMASSLWWVVLTL. Residues 333-351 lie on the Cytoplasmic side of the membrane; sequence TWFLAAGKKWGHEAIEANS. Residues 352-372 form a helical membrane-spanning segment; that stretch reads SYFHLAAWAIPAVKTILILVM. Topologically, residues 373–393 are extracellular; the sequence is RRVAGDELTGVCYVGSMDVNA. A helical transmembrane segment spans residues 394 to 414; sequence LTGFVLIPLACYLVIGTSFIL. Over 415–443 the chain is Cytoplasmic; sequence SGFVALFHIRRVMKTGGENTDKLEKLMVR. A helical transmembrane segment spans residues 444 to 464; sequence IGLFSVLYTVPATCVIACYFY. Over 465-502 the chain is Extracellular; the sequence is ERLNMDYWKILAAQHKCKMNNQTKTLDCLMAASIPAVE. The N-linked (GlcNAc...) asparagine glycan is linked to Asn-485. Residues 503 to 523 form a helical membrane-spanning segment; it reads IFMVKIFMLLVVGITSGMWIW. The Cytoplasmic segment spans residues 524–581; sequence TSKTLQSWQQVCSRRLKKKSRRKPASVITSGGIYKKAQHPQKTHHGKYEIPAQSPTCV. Residues 526 to 531 carry the Lys-Thr-X-X-X-Trp motif, mediates interaction with the PDZ domain of Dvl family members motif; that stretch reads KTLQSW. Residues 560–581 form a disordered region; that stretch reads AQHPQKTHHGKYEIPAQSPTCV. The PDZ-binding signature appears at 579 to 581; that stretch reads TCV.

It belongs to the G-protein coupled receptor Fz/Smo family. Interacts with WNT7B. Interacts with MYOC. Ubiquitinated by ZNRF3, leading to its degradation by the proteasome. Highest levels in the placenta and fetal kidney, followed by fetal lung and brain. In adult brain, abundantly expressed in the cerebellum, followed by cerebral cortex, medulla and spinal cord; very low levels in total brain, frontal lobe, temporal lobe and putamen. Weak expression detected in adult brain, heart, lung, skeletal muscle, pancreas, spleen and prostate.

It localises to the cell membrane. Functionally, receptor for Wnt proteins. Functions in the canonical Wnt/beta-catenin signaling pathway. The canonical Wnt/beta-catenin signaling pathway leads to the activation of disheveled proteins, inhibition of GSK-3 kinase, nuclear accumulation of beta-catenin and activation of Wnt target genes. A second signaling pathway involving PKC and calcium fluxes has been seen for some family members, but it is not yet clear if it represents a distinct pathway or if it can be integrated in the canonical pathway, as PKC seems to be required for Wnt-mediated inactivation of GSK-3 kinase. Both pathways seem to involve interactions with G-proteins. May be involved in transduction and intercellular transmission of polarity information during tissue morphogenesis and/or in differentiated tissues. The chain is Frizzled-10 (FZD10) from Homo sapiens (Human).